Consider the following 1004-residue polypeptide: Retrovirus-related Pol polyprotein from type-1 retrotransposable element R1 (1004 aa).

A Reverse transcriptase domain is found at 450 to 717 (QCLLESYFPQ…SEVKHLGIFV (268 aa)). The segment at 853–1004 (LSGSQFKELL…RLMRGMRIRE (152 aa)) is nucleic acid-binding endonuclease.

The enzyme catalyses DNA(n) + a 2'-deoxyribonucleoside 5'-triphosphate = DNA(n+1) + diphosphate. The sequence is that of Retrovirus-related Pol polyprotein from type-1 retrotransposable element R1 from Bradysia coprophila (Dark-winged fungus gnat).